A 447-amino-acid polypeptide reads, in one-letter code: Asparagine--tRNA ligase (447 aa).

Belongs to the class-II aminoacyl-tRNA synthetase family. As to quaternary structure, homodimer.

Its subcellular location is the cytoplasm. It carries out the reaction tRNA(Asn) + L-asparagine + ATP = L-asparaginyl-tRNA(Asn) + AMP + diphosphate + H(+). The chain is Asparagine--tRNA ligase from Lactococcus lactis subsp. lactis (strain IL1403) (Streptococcus lactis).